The sequence spans 277 residues: (-)-trans-carveol dehydrogenase (277 aa).

10 to 32 (LITGAARGQGRSHAIKLAEEGAD) provides a ligand contact to NAD(+). Serine 156 provides a ligand contact to substrate. The active-site Proton acceptor is the tyrosine 169.

This sequence belongs to the short-chain dehydrogenases/reductases (SDR) family. In terms of assembly, homotetramer.

It carries out the reaction (1S,5R)-carveol + NAD(+) = (R)-carvone + NADH + H(+). The catalysed reaction is (1S,5S)-carveol + NAD(+) = (S)-carvone + NADH + H(+). Its pathway is terpene metabolism; limonene degradation. Competitively inhibited by the product (S)- or (R)-carvone. Functionally, catalyzes the oxidation of carveol to carvone, with a strong stereoselectivity since it efficiently converts only the (6S)-stereoisomers, of which (-)-(4R,6S)-trans-carveol is the better substrate. Displays a broad substrate specificity with a preference for substituted cyclohexanols, and does not catalyze the oxidation of primary or short chain aliphatic secondary alcohols. Is also able, albeit more slowly, to oxidize limonene-1,2-diol into 1-hydroxy-2-oxolimonene. This chain is (-)-trans-carveol dehydrogenase (limC), found in Rhodococcus erythropolis (Arthrobacter picolinophilus).